The chain runs to 139 residues: Non-structural protein 1 (139 aa).

The DLNP; interaction with MAP1B signature appears at 136–139; that stretch reads DLNS.

This sequence belongs to the pneumovirus non-structural protein 1 family. Monomer. Homomultimer. Heteromultimer with NS2. Interacts with the matrix protein M. Interacts with host ELOC and CUL2; this interaction allows NS1 to form an active E3 ligase with ELOC and CUL2. Interacts with host IRF3; this interaction leads to the disrupted association of IRF3 with CREBBP and thus reduced binding of IRF3 to the IFN-beta promoter. Interacts with host MAVS; this interaction prevents MAVS binding to RIGI and inhibits signaling pathway leading to interferon production. Interacts with host MAP1B/microtubule-associated protein 1B. Interacts with host TRIM25 (via SPRY domain); this interaction suppresses RIGI ubiquitination and results in decreased interaction between RIGI and MAVS.

It localises to the host cytoplasm. It is found in the host mitochondrion. Its subcellular location is the host nucleus. Plays a major role in antagonizing the type I IFN-mediated antiviral response by degrading or inhibiting multiple cellular factors required for either IFN induction or response pathways. Acts cooperatively with NS2 to repress activation and nuclear translocation of host IFN-regulatory factor IRF3. Also disrupts the association of IRF3 with CREBBP. Interacts with host mitochondrial-associated membrane (MAM) MAVS and prevents the interaction with RIGI. Interacts with TRIM25 to suppress TRIM25-mediated RIGI ubiquitination and thereby RIGI-MAVS interaction. Together with NS2, participates in the proteasomal degradation of host STAT2, IRF3, IRF7, TBK1 and RIGI through a NS-degradasome involving CUL2 and Elongin-C. The degradasome requires an intact mitochondrial MAVS. Decreases the levels of host TRAF3 and IKBKE/IKK-epsilon. As functions other than disruptions of the type I IFN-mediated antiviral signaling pathways, induces host SOCS1 and SOCS3 expression. Suppresses premature apoptosis by an NF-kappa-B-dependent, interferon-independent mechanism and thus facilitates virus growth. Additionally, NS1 may serve some inhibitory role in viral transcription and RNA replication. Suppresses proliferation and activation of host CD103+ CD8+ cytotoxic T-lymphocytes and Th17 helper T-lymphocytes. The chain is Non-structural protein 1 (1C) from Human respiratory syncytial virus B (strain 18537).